The sequence spans 270 residues: Centromere protein Q (270 aa).

The disordered stretch occupies residues 1 to 59 (MSGKANTSKKKSQRVKRNVKQRADKEDEELDSPENKVGNRAKRNRSHAGHLSSKEQTKC). 2 stretches are compositionally biased toward basic residues: residues 7-20 (TSKK…RNVK) and 39-48 (NRAKRNRSHA). At S52 the chain carries Phosphoserine. Residues 143–205 (LKVEREQERA…EEEMKEVFHI (63 aa)) are a coiled coil.

Belongs to the CENP-Q/OKP1 family. In terms of assembly, component of the CENPA-CAD complex, composed of CENPI, CENPK, CENPL, CENPO, CENPP, CENPQ, CENPR and CENPS. The CENPA-CAD complex interacts with the CENPA-NAC complex, at least composed of CENPA, CENPC, CENPH, CENPM, CENPN, CENPT and CENPU. Post-translationally, phosphorylation at Ser-52 is essential for CENPE recruitment to kinetochores and orderly chromosome congression.

It is found in the nucleus. It localises to the chromosome. The protein localises to the centromere. Its function is as follows. Component of the CENPA-CAD (nucleosome distal) complex, a complex recruited to centromeres which is involved in assembly of kinetochore proteins, mitotic progression and chromosome segregation. May be involved in incorporation of newly synthesized CENPA into centromeres via its interaction with the CENPA-NAC complex. Plays an important role in chromosome congression and in the recruitment of CENP-O complex (which comprises CENPO, CENPP, CENPQ and CENPU), CENPE and PLK1 to the kinetochores. The polypeptide is Centromere protein Q (Cenpq) (Rattus norvegicus (Rat)).